Consider the following 342-residue polypeptide: Methionine import ATP-binding protein MetN 3 (342 aa).

Positions isoleucine 2–valine 241 constitute an ABC transporter domain. Glycine 38–serine 45 is an ATP binding site.

The protein belongs to the ABC transporter superfamily. Methionine importer (TC 3.A.1.24) family. In terms of assembly, the complex is composed of two ATP-binding proteins (MetN), two transmembrane proteins (MetI) and a solute-binding protein (MetQ).

It is found in the cell membrane. The catalysed reaction is L-methionine(out) + ATP + H2O = L-methionine(in) + ADP + phosphate + H(+). The enzyme catalyses D-methionine(out) + ATP + H2O = D-methionine(in) + ADP + phosphate + H(+). In terms of biological role, part of the ABC transporter complex MetNIQ involved in methionine import. Responsible for energy coupling to the transport system. This is Methionine import ATP-binding protein MetN 3 from Shouchella clausii (strain KSM-K16) (Alkalihalobacillus clausii).